The chain runs to 172 residues: Peroxiredoxin AHP1 (172 aa).

The Thioredoxin domain occupies 4–171 (LQPGDSFPAN…VLTVLGNQGK (168 aa)). A Glycyl lysine isopeptide (Lys-Gly) (interchain with G-Cter in URM1) cross-link involves residue Lys44. Cys60 acts as the Cysteine sulfenic acid (-SOH) intermediate in catalysis. The residue at position 60 (Cys60) is a Cysteine persulfide. Residues Lys63, Lys99, Lys141, Lys156, and Lys171 each participate in a glycyl lysine isopeptide (Lys-Gly) (interchain with G-Cter in URM1) cross-link.

The protein belongs to the peroxiredoxin family. Prx5 subfamily. As to quaternary structure, homodimer; disulfide-linked, upon oxidation. In terms of processing, conjugated to URM1, a ubiquitin-like protein, in response to oxidative stresses. The attachment of URM1 to lysine residues exclusively depends on the presence of a peroxidatic cysteine in the target protein, with low specificity for the particular residue, motif, or structural context at which urmylation can occur. The URM1-conjugation reaction is mechanistically and directly coupled to the process of cysteine persulfidation, transfering the sulfur atom of the URM1 thiocarboxyl group to redox-active cysteine residues in the target protein if it is exposed to oxidative conditions. Post-translationally, persulfidated on specific redox-active cysteine residues. Persulfidation (also called protein S-sulfhydration) may provide a molecular mechanism that enables cells to protect vulnerable cysteine residues from reactive oxygen species (ROS) under stress conditions.

The protein localises to the cytoplasm. It carries out the reaction a hydroperoxide + [thioredoxin]-dithiol = an alcohol + [thioredoxin]-disulfide + H2O. Its function is as follows. Thiol-specific peroxidase that catalyzes the reduction of hydrogen peroxide and organic hydroperoxides to water and alcohols, respectively. Plays a role in cell protection against oxidative stress by detoxifying peroxides and as sensor of hydrogen peroxide-mediated signaling events. Preferentially eliminates organic peroxides rather than hydrogen peroxide. Relays alkyl hydroperoxides as a signal to the transcription factor CAD1/YAP2 by inducing the formation of intramolecular disulfide bonds in CAD1, which causes its nuclear accumulation and activation. Involved in cellular Mn(2+) homeostasis. The polypeptide is Peroxiredoxin AHP1 (AHP1) (Chaetomium thermophilum (strain DSM 1495 / CBS 144.50 / IMI 039719) (Thermochaetoides thermophila)).